The following is a 396-amino-acid chain: Calsequestrin-1 (396 aa).

Residues 1 to 34 (MSATDRMGPRAVPGLRLALLLLLVLGTPKSGVQG) form the signal peptide. Tyr43 bears the Phosphotyrosine mark. Position 81 is a phosphoserine (Ser81). At Thr124 the chain carries Phosphothreonine. Ser216 is subject to Phosphoserine. Residue Asn350 is glycosylated (N-linked (GlcNAc...) asparagine).

It belongs to the calsequestrin family. As to quaternary structure, monomer; increases in response to a depletion of intracellular calcium. Homodimer. Homotetramer and homopolymer. Can form linear homooligomers. Ca(2+) ions promote oligomerization. Interacts (via C-terminal end and preferentially with the monomeric form) with STIM1; this interaction increases in response to a depletion of intracellular calcium, decreases both STIM1 aggregation and clustering, interaction of STIM1 with ORAI1 and store-operated Ca(2+) entry (SOCE) activity. Interacts with ASPH and TRDN. In terms of processing, N-glycosylated. In terms of tissue distribution, expressed in myoblasts (at protein level).

The protein resides in the endoplasmic reticulum. It localises to the sarcoplasmic reticulum. The protein localises to the sarcoplasmic reticulum lumen. It is found in the sarcoplasmic reticulum membrane. Its subcellular location is the mitochondrion matrix. In terms of biological role, calsequestrin is a high-capacity, moderate affinity, calcium-binding protein and thus acts as an internal calcium store in muscle. Calcium ions are bound by clusters of acidic residues at the protein surface, often at the interface between subunits. Can bind around 80 Ca(2+) ions. Regulates the release of lumenal Ca(2+) via the calcium release channel RYR1; this plays an important role in triggering muscle contraction. Negatively regulates store-operated Ca(2+) entry (SOCE) activity. This Homo sapiens (Human) protein is Calsequestrin-1 (CASQ1).